Reading from the N-terminus, the 29-residue chain is Protein 1.5 (29 aa).

This Escherichia phage T7 (Bacteriophage T7) protein is Protein 1.5.